Consider the following 408-residue polypeptide: MDEFFLMNSFDLAGKTVYLRVDINAPVNPLTGEIMGIDRFRAHIDTIRNLRNSKVVIVAHQSRPGKDDFISLRQHAQILSHLLNKRVQFVDQLFGSQVNRAVSEMSDGDIVMLENSRFYSEEVDLTTIESMESSNIVRSLSPLFDYFIIDAFAAIHRAQTTLVGFHRIKPNIAGTLIEREVSMIERFRKIREKPKIAILGGAKIEDSIAVSENFLSRGFVDKILTGGVVANAFLWASGFDIGKKNREFIMKNNGDYEKLLDKCRAILSKYGDKLVMPTDFVMNPSGQRISINEKIPDDQILADIGLDTIVEYSEIIDGARAIFMNGPMGMYEIEDYSSGTREVFTAVAHSKAFKLAGGGHTLSALDKLGLTKMIDHASTGGGALISYLSGETMPVLEALKESKKLFEG.

Substrate contacts are provided by residues 22–24, Arg-39, 60–63, Arg-117, and Arg-157; these read DIN and HQSR. Residues Glu-332 and 358-361 contribute to the ATP site; that span reads GGHT.

This sequence belongs to the phosphoglycerate kinase family. As to quaternary structure, monomer.

It localises to the cytoplasm. The catalysed reaction is (2R)-3-phosphoglycerate + ATP = (2R)-3-phospho-glyceroyl phosphate + ADP. It participates in carbohydrate degradation; glycolysis; pyruvate from D-glyceraldehyde 3-phosphate: step 2/5. In Thermoplasma acidophilum (strain ATCC 25905 / DSM 1728 / JCM 9062 / NBRC 15155 / AMRC-C165), this protein is Phosphoglycerate kinase (pgk).